We begin with the raw amino-acid sequence, 269 residues long: Eukaryotic translation initiation factor 3 subunit G-1 (269 aa).

The region spanning 188–266 (AAIRISNLSE…LILSVEWSKP (79 aa)) is the RRM domain.

It belongs to the eIF-3 subunit G family. In terms of assembly, component of the eukaryotic translation initiation factor 3 (eIF-3) complex. The eIF-3 complex interacts with pix.

Its subcellular location is the cytoplasm. RNA-binding component of the eukaryotic translation initiation factor 3 (eIF-3) complex, which is involved in protein synthesis of a specialized repertoire of mRNAs and, together with other initiation factors, stimulates binding of mRNA and methionyl-tRNAi to the 40S ribosome. The eIF-3 complex specifically targets and initiates translation of a subset of mRNAs involved in cell proliferation. This subunit can bind 18S rRNA. This is Eukaryotic translation initiation factor 3 subunit G-1 from Drosophila erecta (Fruit fly).